The chain runs to 169 residues: Large ribosomal subunit protein uL15 (169 aa).

Residues 1 to 13 show a composition bias toward basic and acidic residues; it reads MKLNEIRDNEGAT. Residues 1-40 form a disordered region; it reads MKLNEIRDNEGATKNRMRVGRGIGSGKGKTGGRGVKGQKA. The segment covering 21–35 has biased composition (gly residues); that stretch reads RGIGSGKGKTGGRGV.

This sequence belongs to the universal ribosomal protein uL15 family. In terms of assembly, part of the 50S ribosomal subunit.

Binds to the 23S rRNA. This Methylorubrum populi (strain ATCC BAA-705 / NCIMB 13946 / BJ001) (Methylobacterium populi) protein is Large ribosomal subunit protein uL15.